We begin with the raw amino-acid sequence, 167 residues long: Claudin domain-containing protein 2 (167 aa).

Transmembrane regions (helical) follow at residues 13–32 (LLNL…NYWT), 61–81 (VSAA…GIGI), 96–116 (TIVL…VYTS), and 130–150 (YFFG…FLLA).

The protein belongs to the PMP-22/EMP/MP20 family.

The protein resides in the membrane. The sequence is that of Claudin domain-containing protein 2 (Cldnd2) from Mus musculus (Mouse).